Consider the following 462-residue polypeptide: Alkaline ceramidase TOD1 (462 aa).

Residues 1-18 (MGKFITTTLSPPLYARSK) lie on the Cytoplasmic side of the membrane. A helical transmembrane segment spans residues 19–39 (LLCFSLLYLFSTIFLFLYVSL). The Lumenal portion of the chain corresponds to 40 to 462 (SRNQCIFRYS…CKNYLTDMWG (423 aa)). N-linked (GlcNAc...) asparagine glycans are attached at residues asparagine 121, asparagine 132, and asparagine 449.

This sequence belongs to the alkaline ceramidase family. As to expression, preferentially expressed in pollen grains, pollen tubes and silique guard cells, but barely detectable in roots, stems and leaves.

The protein localises to the golgi apparatus membrane. The catalysed reaction is an N-acylsphing-4-enine + H2O = sphing-4-enine + a fatty acid. It functions in the pathway lipid metabolism. Endoplasmic reticulum ceramidase that catalyzes the hydrolysis of ceramides into sphingosine and free fatty acids at alkaline pH (e.g. pH 9.5). Inactive on phytoceramide. Involved in the regulation of turgor pressure in guard cells and pollen tubes. The protein is Alkaline ceramidase TOD1 of Arabidopsis thaliana (Mouse-ear cress).